The primary structure comprises 151 residues: 3-dehydroquinate dehydratase 1 (151 aa).

Residue Y24 is the Proton acceptor of the active site. N75, H81, and D88 together coordinate substrate. H101 acts as the Proton donor in catalysis. Substrate is bound by residues I102 to S103 and R112.

Belongs to the type-II 3-dehydroquinase family. As to quaternary structure, homododecamer.

The enzyme catalyses 3-dehydroquinate = 3-dehydroshikimate + H2O. The protein operates within metabolic intermediate biosynthesis; chorismate biosynthesis; chorismate from D-erythrose 4-phosphate and phosphoenolpyruvate: step 3/7. Functionally, catalyzes a trans-dehydration via an enolate intermediate. In Corynebacterium efficiens (strain DSM 44549 / YS-314 / AJ 12310 / JCM 11189 / NBRC 100395), this protein is 3-dehydroquinate dehydratase 1 (aroQ1).